A 216-amino-acid polypeptide reads, in one-letter code: Octanoyltransferase (216 aa).

Positions 35-213 constitute a BPL/LPL catalytic domain; it reads NSNPDFIWIG…TIEEEFNFDF (179 aa). Residues 77–84, 144–146, and 157–159 contribute to the substrate site; these read RGGEVTCH, SIG, and GFS. Catalysis depends on Cys175, which acts as the Acyl-thioester intermediate.

Belongs to the LipB family.

It is found in the cytoplasm. The catalysed reaction is octanoyl-[ACP] + L-lysyl-[protein] = N(6)-octanoyl-L-lysyl-[protein] + holo-[ACP] + H(+). It functions in the pathway protein modification; protein lipoylation via endogenous pathway; protein N(6)-(lipoyl)lysine from octanoyl-[acyl-carrier-protein]: step 1/2. In terms of biological role, catalyzes the transfer of endogenously produced octanoic acid from octanoyl-acyl-carrier-protein onto the lipoyl domains of lipoate-dependent enzymes. Lipoyl-ACP can also act as a substrate although octanoyl-ACP is likely to be the physiological substrate. In Prochlorococcus marinus (strain MIT 9301), this protein is Octanoyltransferase.